A 374-amino-acid chain; its full sequence is UPF0496 protein At4g34320 (374 aa).

Transmembrane regions (helical) follow at residues isoleucine 215–alanine 235 and proline 238–isoleucine 258.

Belongs to the UPF0496 family.

It localises to the membrane. This is UPF0496 protein At4g34320 from Arabidopsis thaliana (Mouse-ear cress).